The primary structure comprises 196 residues: Ribosomal RNA large subunit methyltransferase E (196 aa).

S-adenosyl-L-methionine is bound by residues G50, W52, D70, D87, and D112. The active-site Proton acceptor is the K152.

Belongs to the class I-like SAM-binding methyltransferase superfamily. RNA methyltransferase RlmE family.

Its subcellular location is the cytoplasm. The enzyme catalyses uridine(2552) in 23S rRNA + S-adenosyl-L-methionine = 2'-O-methyluridine(2552) in 23S rRNA + S-adenosyl-L-homocysteine + H(+). Its function is as follows. Specifically methylates the uridine in position 2552 of 23S rRNA at the 2'-O position of the ribose in the fully assembled 50S ribosomal subunit. This is Ribosomal RNA large subunit methyltransferase E from Bdellovibrio bacteriovorus (strain ATCC 15356 / DSM 50701 / NCIMB 9529 / HD100).